Here is a 119-residue protein sequence, read N- to C-terminus: Ribosome-binding factor A (119 aa).

It belongs to the RbfA family. As to quaternary structure, monomer. Binds 30S ribosomal subunits, but not 50S ribosomal subunits or 70S ribosomes.

The protein localises to the cytoplasm. In terms of biological role, one of several proteins that assist in the late maturation steps of the functional core of the 30S ribosomal subunit. Associates with free 30S ribosomal subunits (but not with 30S subunits that are part of 70S ribosomes or polysomes). Required for efficient processing of 16S rRNA. May interact with the 5'-terminal helix region of 16S rRNA. This is Ribosome-binding factor A from Buchnera aphidicola subsp. Baizongia pistaciae (strain Bp).